The chain runs to 383 residues: Serine protease 23 (383 aa).

A signal peptide spans Met1 to Pro23. The N-linked (GlcNAc...) asparagine glycan is linked to Asn93. The cysteines at positions 160 and 176 are disulfide-linked. His175 acts as the Charge relay system in catalysis. An N-linked (GlcNAc...) asparagine glycan is attached at Asn207. Active-site charge relay system residues include Asp240 and Ser316.

The protein belongs to the peptidase S1 family.

Its subcellular location is the secreted. In Rattus norvegicus (Rat), this protein is Serine protease 23 (Prss23).